Consider the following 304-residue polypeptide: Tyrosine recombinase XerC (304 aa).

Positions 2–88 (ANVKNFLTLF…ALRSFYKFLL (87 aa)) constitute a Core-binding (CB) domain. The Tyr recombinase domain maps to 109–294 (RIPKFLYEKE…SKDMLRKTYM (186 aa)). Residues R149, K173, H246, R249, and H272 contribute to the active site. The active-site O-(3'-phospho-DNA)-tyrosine intermediate is Y281.

It belongs to the 'phage' integrase family. XerC subfamily. Forms a cyclic heterotetrameric complex composed of two molecules of XerC and two molecules of XerD.

It localises to the cytoplasm. Its function is as follows. Site-specific tyrosine recombinase, which acts by catalyzing the cutting and rejoining of the recombining DNA molecules. The XerC-XerD complex is essential to convert dimers of the bacterial chromosome into monomers to permit their segregation at cell division. It also contributes to the segregational stability of plasmids. In Bacillus licheniformis (strain ATCC 14580 / DSM 13 / JCM 2505 / CCUG 7422 / NBRC 12200 / NCIMB 9375 / NCTC 10341 / NRRL NRS-1264 / Gibson 46), this protein is Tyrosine recombinase XerC.